A 368-amino-acid polypeptide reads, in one-letter code: Phosphate acyltransferase (368 aa).

The protein belongs to the PlsX family. In terms of assembly, homodimer. Probably interacts with PlsY.

The protein resides in the cytoplasm. The catalysed reaction is a fatty acyl-[ACP] + phosphate = an acyl phosphate + holo-[ACP]. The protein operates within lipid metabolism; phospholipid metabolism. In terms of biological role, catalyzes the reversible formation of acyl-phosphate (acyl-PO(4)) from acyl-[acyl-carrier-protein] (acyl-ACP). This enzyme utilizes acyl-ACP as fatty acyl donor, but not acyl-CoA. This chain is Phosphate acyltransferase, found in Granulibacter bethesdensis (strain ATCC BAA-1260 / CGDNIH1).